We begin with the raw amino-acid sequence, 362 residues long: GDSL esterase/lipase At5g18430 (362 aa).

The N-terminal stretch at 1–19 (MTISTVIAFMSMFLVFVMS) is a signal peptide. Catalysis depends on Ser35, which acts as the Nucleophile. A glycan (N-linked (GlcNAc...) asparagine) is linked at Asn117. Catalysis depends on residues Asp327 and His330. Asn355 is a glycosylation site (N-linked (GlcNAc...) asparagine).

Belongs to the 'GDSL' lipolytic enzyme family.

It localises to the secreted. The sequence is that of GDSL esterase/lipase At5g18430 from Arabidopsis thaliana (Mouse-ear cress).